An 83-amino-acid polypeptide reads, in one-letter code: Small ribosomal subunit protein uS17c (83 aa).

The protein belongs to the universal ribosomal protein uS17 family. In terms of assembly, part of the 30S ribosomal subunit.

It localises to the plastid. The protein resides in the chloroplast. In terms of biological role, one of the primary rRNA binding proteins, it binds specifically to the 5'-end of 16S ribosomal RNA. The protein is Small ribosomal subunit protein uS17c (rps17) of Pyropia yezoensis (Susabi-nori).